Reading from the N-terminus, the 198-residue chain is Recombination protein RecR (198 aa).

The C4-type zinc finger occupies 58–73 (CLNCGNVGTSDICDIC). The Toprim domain maps to 81–175 (GELCVVEDVA…RLTSLAQGVP (95 aa)).

This sequence belongs to the RecR family.

In terms of biological role, may play a role in DNA repair. It seems to be involved in an RecBC-independent recombinational process of DNA repair. It may act with RecF and RecO. In Ruegeria pomeroyi (strain ATCC 700808 / DSM 15171 / DSS-3) (Silicibacter pomeroyi), this protein is Recombination protein RecR.